Here is a 313-residue protein sequence, read N- to C-terminus: HPr kinase/phosphorylase (313 aa).

Catalysis depends on residues His141 and Lys162. 156 to 163 (GKSGIGKS) provides a ligand contact to ATP. Ser163 is a binding site for Mg(2+). The Proton acceptor; for phosphorylation activity. Proton donor; for dephosphorylation activity role is filled by Asp180. Residues 203–212 (IEIRGIGIFD) form an important for the catalytic mechanism of both phosphorylation and dephosphorylation region. Glu204 serves as a coordination point for Mg(2+). The active site involves Arg247. An important for the catalytic mechanism of dephosphorylation region spans residues 268 to 273 (PVSAGR).

It belongs to the HPrK/P family. As to quaternary structure, homohexamer. The cofactor is Mg(2+).

It catalyses the reaction [HPr protein]-L-serine + ATP = [HPr protein]-O-phospho-L-serine + ADP + H(+). The enzyme catalyses [HPr protein]-O-phospho-L-serine + phosphate + H(+) = [HPr protein]-L-serine + diphosphate. Catalyzes the ATP- as well as the pyrophosphate-dependent phosphorylation of a specific serine residue in HPr, a phosphocarrier protein of the phosphoenolpyruvate-dependent sugar phosphotransferase system (PTS). HprK/P also catalyzes the pyrophosphate-producing, inorganic phosphate-dependent dephosphorylation (phosphorolysis) of seryl-phosphorylated HPr (P-Ser-HPr). The two antagonistic activities of HprK/P are regulated by several intracellular metabolites, which change their concentration in response to the absence or presence of rapidly metabolisable carbon sources (glucose, fructose, etc.) in the growth medium. Therefore, by controlling the phosphorylation state of HPr, HPrK/P is a sensor enzyme that plays a major role in the regulation of carbon metabolism and sugar transport: it mediates carbon catabolite repression (CCR), and regulates PTS-catalyzed carbohydrate uptake and inducer exclusion. The chain is HPr kinase/phosphorylase from Mycoplasma mycoides subsp. mycoides SC (strain CCUG 32753 / NCTC 10114 / PG1).